A 526-amino-acid polypeptide reads, in one-letter code: ATP synthase subunit alpha (526 aa).

Residue 178-185 (GDRQTGKT) coordinates ATP.

It belongs to the ATPase alpha/beta chains family. F-type ATPases have 2 components, CF(1) - the catalytic core - and CF(0) - the membrane proton channel. CF(1) has five subunits: alpha(3), beta(3), gamma(1), delta(1), epsilon(1). CF(0) has four main subunits: a(1), b(1), b'(1) and c(9-12).

It localises to the cell membrane. It carries out the reaction ATP + H2O + 4 H(+)(in) = ADP + phosphate + 5 H(+)(out). Its function is as follows. Produces ATP from ADP in the presence of a proton gradient across the membrane. The alpha chain is a regulatory subunit. The chain is ATP synthase subunit alpha from Roseiflexus castenholzii (strain DSM 13941 / HLO8).